A 103-amino-acid chain; its full sequence is Large ribosomal subunit protein bL21 (103 aa).

This sequence belongs to the bacterial ribosomal protein bL21 family. As to quaternary structure, part of the 50S ribosomal subunit. Contacts protein L20.

This protein binds to 23S rRNA in the presence of protein L20. The chain is Large ribosomal subunit protein bL21 from Azoarcus sp. (strain BH72).